The sequence spans 196 residues: Holliday junction branch migration complex subunit RuvA (196 aa).

The interval 1–63 (MYEYFKGIIS…EDAELLYGFA (63 aa)) is domain I. Residues 64 to 142 (TEEEKQLFLS…AADGLAESKA (79 aa)) form a domain II region. The interval 143-146 (PVQT) is flexible linker. Residues 147–196 (VDNQELEEAMEAMLALGYKATELKKIKKFFEGTTDTAENYIKSALKMLVK) are domain III.

This sequence belongs to the RuvA family. In terms of assembly, homotetramer. Forms an RuvA(8)-RuvB(12)-Holliday junction (HJ) complex. HJ DNA is sandwiched between 2 RuvA tetramers; dsDNA enters through RuvA and exits via RuvB. An RuvB hexamer assembles on each DNA strand where it exits the tetramer. Each RuvB hexamer is contacted by two RuvA subunits (via domain III) on 2 adjacent RuvB subunits; this complex drives branch migration. In the full resolvosome a probable DNA-RuvA(4)-RuvB(12)-RuvC(2) complex forms which resolves the HJ.

It localises to the cytoplasm. Functionally, the RuvA-RuvB-RuvC complex processes Holliday junction (HJ) DNA during genetic recombination and DNA repair, while the RuvA-RuvB complex plays an important role in the rescue of blocked DNA replication forks via replication fork reversal (RFR). RuvA specifically binds to HJ cruciform DNA, conferring on it an open structure. The RuvB hexamer acts as an ATP-dependent pump, pulling dsDNA into and through the RuvAB complex. HJ branch migration allows RuvC to scan DNA until it finds its consensus sequence, where it cleaves and resolves the cruciform DNA. The polypeptide is Holliday junction branch migration complex subunit RuvA (Streptococcus gordonii (strain Challis / ATCC 35105 / BCRC 15272 / CH1 / DL1 / V288)).